We begin with the raw amino-acid sequence, 742 residues long: Phosphoribosylformylglycinamidine synthase subunit PurL (742 aa).

Residue H53 is part of the active site. ATP contacts are provided by Y56 and K95. E97 serves as a coordination point for Mg(2+). Residues S98–H101 and R120 contribute to the substrate site. Catalysis depends on H99, which acts as the Proton acceptor. D121 is a binding site for Mg(2+). Q245 contacts substrate. Mg(2+) is bound at residue D275. E319 to Q321 provides a ligand contact to substrate. ATP contacts are provided by D502 and G539. N540 is a Mg(2+) binding site. Residue S542 coordinates substrate.

Belongs to the FGAMS family. In terms of assembly, monomer. Part of the FGAM synthase complex composed of 1 PurL, 1 PurQ and 2 PurS subunits.

It is found in the cytoplasm. The enzyme catalyses N(2)-formyl-N(1)-(5-phospho-beta-D-ribosyl)glycinamide + L-glutamine + ATP + H2O = 2-formamido-N(1)-(5-O-phospho-beta-D-ribosyl)acetamidine + L-glutamate + ADP + phosphate + H(+). Its pathway is purine metabolism; IMP biosynthesis via de novo pathway; 5-amino-1-(5-phospho-D-ribosyl)imidazole from N(2)-formyl-N(1)-(5-phospho-D-ribosyl)glycinamide: step 1/2. In terms of biological role, part of the phosphoribosylformylglycinamidine synthase complex involved in the purines biosynthetic pathway. Catalyzes the ATP-dependent conversion of formylglycinamide ribonucleotide (FGAR) and glutamine to yield formylglycinamidine ribonucleotide (FGAM) and glutamate. The FGAM synthase complex is composed of three subunits. PurQ produces an ammonia molecule by converting glutamine to glutamate. PurL transfers the ammonia molecule to FGAR to form FGAM in an ATP-dependent manner. PurS interacts with PurQ and PurL and is thought to assist in the transfer of the ammonia molecule from PurQ to PurL. This chain is Phosphoribosylformylglycinamidine synthase subunit PurL, found in Lactobacillus acidophilus (strain ATCC 700396 / NCK56 / N2 / NCFM).